We begin with the raw amino-acid sequence, 322 residues long: HPr kinase/phosphorylase (322 aa).

Residues His-146 and Lys-167 contribute to the active site. 161–168 (GDSGLGKS) contributes to the ATP binding site. Ser-168 contacts Mg(2+). Catalysis depends on Asp-185, which acts as the Proton acceptor; for phosphorylation activity. Proton donor; for dephosphorylation activity. Residues 209 to 218 (LEVRGLGLLD) form an important for the catalytic mechanism of both phosphorylation and dephosphorylation region. Mg(2+) is bound at residue Glu-210. Arg-250 is a catalytic residue. An important for the catalytic mechanism of dephosphorylation region spans residues 271 to 276 (QVAAGR).

This sequence belongs to the HPrK/P family. As to quaternary structure, homohexamer. Mg(2+) is required as a cofactor.

It catalyses the reaction [HPr protein]-L-serine + ATP = [HPr protein]-O-phospho-L-serine + ADP + H(+). It carries out the reaction [HPr protein]-O-phospho-L-serine + phosphate + H(+) = [HPr protein]-L-serine + diphosphate. Functionally, catalyzes the ATP- as well as the pyrophosphate-dependent phosphorylation of a specific serine residue in HPr, a phosphocarrier protein of the phosphoenolpyruvate-dependent sugar phosphotransferase system (PTS). HprK/P also catalyzes the pyrophosphate-producing, inorganic phosphate-dependent dephosphorylation (phosphorolysis) of seryl-phosphorylated HPr (P-Ser-HPr). This chain is HPr kinase/phosphorylase, found in Paraburkholderia phymatum (strain DSM 17167 / CIP 108236 / LMG 21445 / STM815) (Burkholderia phymatum).